Reading from the N-terminus, the 411-residue chain is Multidrug resistance protein MdtG (411 aa).

Transmembrane regions (helical) follow at residues 14-34 (LFVA…IMPF), 56-76 (LVFS…GGLA), 89-109 (ALGM…WQFL), 113-133 (AVLG…ATQV), 144-164 (TLST…GLLA), 171-191 (PVFY…LLYV), 219-239 (ILSL…IAPI), 254-274 (LAFV…MSAP), 288-308 (ILVF…FVQT), and 376-396 (AVFC…WWCL).

It belongs to the major facilitator superfamily. DHA1 family. MdtG (TC 2.A.1.2.20) subfamily.

It localises to the cell inner membrane. The chain is Multidrug resistance protein MdtG from Serratia proteamaculans (strain 568).